Consider the following 126-residue polypeptide: Small ribosomal subunit protein uS13c (126 aa).

A disordered region spans residues 100–126 (GQRTRTNARTRRGARQTVAGKKKAPSK). Positions 101 to 126 (QRTRTNARTRRGARQTVAGKKKAPSK) are enriched in basic residues.

It belongs to the universal ribosomal protein uS13 family. In terms of assembly, part of the 30S ribosomal subunit.

The protein resides in the plastid. Its subcellular location is the cyanelle. In terms of biological role, located at the top of the head of the 30S subunit, it contacts several helices of the 16S rRNA. This is Small ribosomal subunit protein uS13c from Cyanophora paradoxa.